Reading from the N-terminus, the 436-residue chain is Eukaryotic peptide chain release factor subunit 1 (436 aa).

Belongs to the eukaryotic release factor 1 family. As to quaternary structure, heterodimer of two subunits, one of which binds GTP.

Its subcellular location is the cytoplasm. Its function is as follows. Directs the termination of nascent peptide synthesis (translation) in response to the termination codons UAA and UAG. In B.americanum UGA codes for tryptophan. This chain is Eukaryotic peptide chain release factor subunit 1 (eRF1), found in Blepharisma americanum (Ciliate).